A 338-amino-acid polypeptide reads, in one-letter code: Transferrin receptor subunit ESAG7 (338 aa).

The N-terminal stretch at 1–17 is a signal peptide; the sequence is MRFWFVLLALLGKEIYA. N-linked (GlcNAc...) asparagine glycosylation is found at Asn-26 and Asn-110. 4 cysteine pairs are disulfide-bonded: Cys-34–Cys-161, Cys-84–Cys-311, Cys-144–Cys-215, and Cys-230–Cys-247. Asn-234 is a glycosylation site (N-linked (GlcNAc...) asparagine).

In terms of assembly, heterodimer composed of ESAG6 and ESAG7. N-glycosylated. Glycosylation is dispensable for heterodimer formation and host transferrin binding.

It is found in the cell membrane. Its subcellular location is the flagellar pocket. Transferrin receptor subunit involved in receptor-mediated acquisition of iron from the environment by binding host TF/transferrin. This chain is Transferrin receptor subunit ESAG7, found in Trypanosoma brucei brucei.